Here is a 370-residue protein sequence, read N- to C-terminus: Glutamate 5-kinase (370 aa).

K17 lines the ATP pocket. Substrate is bound by residues S57, D144, and N156. ATP-binding positions include S176–D177 and T220–K226. Residues A282–P360 form the PUA domain.

It belongs to the glutamate 5-kinase family.

The protein resides in the cytoplasm. The enzyme catalyses L-glutamate + ATP = L-glutamyl 5-phosphate + ADP. It functions in the pathway amino-acid biosynthesis; L-proline biosynthesis; L-glutamate 5-semialdehyde from L-glutamate: step 1/2. Catalyzes the transfer of a phosphate group to glutamate to form L-glutamate 5-phosphate. This Mycolicibacterium smegmatis (strain ATCC 700084 / mc(2)155) (Mycobacterium smegmatis) protein is Glutamate 5-kinase.